The following is a 130-amino-acid chain: Small ribosomal subunit protein uS9 (130 aa).

Belongs to the universal ribosomal protein uS9 family.

The polypeptide is Small ribosomal subunit protein uS9 (Vibrio atlanticus (strain LGP32) (Vibrio splendidus (strain Mel32))).